Here is a 59-residue protein sequence, read N- to C-terminus: Large ribosomal subunit protein uL30 (59 aa).

Belongs to the universal ribosomal protein uL30 family. As to quaternary structure, part of the 50S ribosomal subunit.

The sequence is that of Large ribosomal subunit protein uL30 from Citrifermentans bemidjiense (strain ATCC BAA-1014 / DSM 16622 / JCM 12645 / Bem) (Geobacter bemidjiensis).